Reading from the N-terminus, the 104-residue chain is PE-PGRS family protein PE_PGRS60 (104 aa).

One can recognise a PE domain in the interval 1–60 (MSYVIAAPEALVAAATDLATLGSTIGAANAAAAGSTTALLTAGADEVSAAIAAYSECTAR). The interval 64 to 104 (HSVRGRRRSMSGSCRPWPQVGAPMRPPRPPASRRCRARSIC) is disordered. Over residues 94–104 (ASRRCRARSIC) the composition is skewed to basic residues.

It belongs to the mycobacterial PE family. PGRS subfamily.

Binds fibronectin. May contribute to pathogenicity. This Mycobacterium tuberculosis (strain ATCC 25618 / H37Rv) protein is PE-PGRS family protein PE_PGRS60.